A 206-amino-acid chain; its full sequence is uncharacterized protein (206 aa).

The chain crosses the membrane as a helical span at residues L4–I24.

Its subcellular location is the membrane. This is an uncharacterized protein from Mycobacterium tuberculosis (strain CDC 1551 / Oshkosh).